The primary structure comprises 111 residues: Large ribosomal subunit protein uL24 (111 aa).

Belongs to the universal ribosomal protein uL24 family. In terms of assembly, part of the 50S ribosomal subunit.

Functionally, one of two assembly initiator proteins, it binds directly to the 5'-end of the 23S rRNA, where it nucleates assembly of the 50S subunit. Its function is as follows. One of the proteins that surrounds the polypeptide exit tunnel on the outside of the subunit. This is Large ribosomal subunit protein uL24 from Chlamydia muridarum (strain MoPn / Nigg).